Consider the following 186-residue polypeptide: FMN-dependent NADH:quinone oxidoreductase 1 (186 aa).

FMN contacts are provided by residues 15-17 and 81-84; these read SVS and MYNF.

This sequence belongs to the azoreductase type 1 family. As to quaternary structure, homodimer. The cofactor is FMN.

The catalysed reaction is 2 a quinone + NADH + H(+) = 2 a 1,4-benzosemiquinone + NAD(+). It catalyses the reaction N,N-dimethyl-1,4-phenylenediamine + anthranilate + 2 NAD(+) = 2-(4-dimethylaminophenyl)diazenylbenzoate + 2 NADH + 2 H(+). In terms of biological role, quinone reductase that provides resistance to thiol-specific stress caused by electrophilic quinones. Its function is as follows. Also exhibits azoreductase activity. Catalyzes the reductive cleavage of the azo bond in aromatic azo compounds to the corresponding amines. In Idiomarina loihiensis (strain ATCC BAA-735 / DSM 15497 / L2-TR), this protein is FMN-dependent NADH:quinone oxidoreductase 1.